Here is a 425-residue protein sequence, read N- to C-terminus: Serine--tRNA ligase (425 aa).

L-serine is bound at residue 235–237; that stretch reads TAE. 266-268 provides a ligand contact to ATP; it reads RSE. E289 provides a ligand contact to L-serine. 353–356 serves as a coordination point for ATP; it reads EISS. L-serine is bound at residue S389.

This sequence belongs to the class-II aminoacyl-tRNA synthetase family. Type-1 seryl-tRNA synthetase subfamily. As to quaternary structure, homodimer. The tRNA molecule binds across the dimer.

The protein resides in the cytoplasm. It carries out the reaction tRNA(Ser) + L-serine + ATP = L-seryl-tRNA(Ser) + AMP + diphosphate + H(+). The enzyme catalyses tRNA(Sec) + L-serine + ATP = L-seryl-tRNA(Sec) + AMP + diphosphate + H(+). The protein operates within aminoacyl-tRNA biosynthesis; selenocysteinyl-tRNA(Sec) biosynthesis; L-seryl-tRNA(Sec) from L-serine and tRNA(Sec): step 1/1. In terms of biological role, catalyzes the attachment of serine to tRNA(Ser). Is also able to aminoacylate tRNA(Sec) with serine, to form the misacylated tRNA L-seryl-tRNA(Sec), which will be further converted into selenocysteinyl-tRNA(Sec). In Desulfotalea psychrophila (strain LSv54 / DSM 12343), this protein is Serine--tRNA ligase.